Consider the following 221-residue polypeptide: Deoxyribose-phosphate aldolase (221 aa).

Catalysis depends on Asp91, which acts as the Proton donor/acceptor. Residue Lys153 is the Schiff-base intermediate with acetaldehyde of the active site. The active-site Proton donor/acceptor is Lys182.

Belongs to the DeoC/FbaB aldolase family. DeoC type 1 subfamily.

It localises to the cytoplasm. It catalyses the reaction 2-deoxy-D-ribose 5-phosphate = D-glyceraldehyde 3-phosphate + acetaldehyde. It functions in the pathway carbohydrate degradation; 2-deoxy-D-ribose 1-phosphate degradation; D-glyceraldehyde 3-phosphate and acetaldehyde from 2-deoxy-alpha-D-ribose 1-phosphate: step 2/2. Catalyzes a reversible aldol reaction between acetaldehyde and D-glyceraldehyde 3-phosphate to generate 2-deoxy-D-ribose 5-phosphate. The polypeptide is Deoxyribose-phosphate aldolase (Clostridium botulinum (strain Alaska E43 / Type E3)).